The primary structure comprises 459 residues: UDP-N-acetylmuramate--L-alanine ligase (459 aa).

118 to 124 (GTHGKTT) is an ATP binding site.

This sequence belongs to the MurCDEF family.

It localises to the cytoplasm. It carries out the reaction UDP-N-acetyl-alpha-D-muramate + L-alanine + ATP = UDP-N-acetyl-alpha-D-muramoyl-L-alanine + ADP + phosphate + H(+). The protein operates within cell wall biogenesis; peptidoglycan biosynthesis. Functionally, cell wall formation. In Lachnospira eligens (strain ATCC 27750 / DSM 3376 / VPI C15-48 / C15-B4) (Eubacterium eligens), this protein is UDP-N-acetylmuramate--L-alanine ligase.